A 465-amino-acid chain; its full sequence is UDP-N-acetylmuramate--L-alanine ligase (465 aa).

ATP is bound at residue 112–118; that stretch reads GTHGKTT.

Belongs to the MurCDEF family.

The protein resides in the cytoplasm. The enzyme catalyses UDP-N-acetyl-alpha-D-muramate + L-alanine + ATP = UDP-N-acetyl-alpha-D-muramoyl-L-alanine + ADP + phosphate + H(+). It participates in cell wall biogenesis; peptidoglycan biosynthesis. In terms of biological role, cell wall formation. The chain is UDP-N-acetylmuramate--L-alanine ligase from Burkholderia pseudomallei (strain 1106a).